The following is a 449-amino-acid chain: METLASLYNEHLSTLQQRTRDVLERHQLDALLIHSGELQRIFLDDRDYPFKVNAQFKAWVPVTQVPNCWLWVDGVNTPKLWFYSPVDYWHCVEPLPDSFWTKAIDIQPLVNANDIAQLLPVQRERVAYIGYAQQRAQALGFSAENINPKPVLDYLHFYRSYKTDYELACMREAQKTAVAGHNAAHEAFLSGMSEFDINLAYLMATGQRDTDVPYDNIVALNEHSAVLHYTTLQHQPPAEIRSFLIDAGAEYNGYAADLTRTYVAGSKNTADSKNDFAALIKDLNNEQLGLIKTLKCGVNYTEYNVQMHQRIAKLLRTHNLVTGISEEAMVEQGITCPFLPHGLGHPLGLQVHDTAGFMQDDKGAHLSAPSKYPYLRCTRILQPRMVLTIEPGLYFIESLLAPWRSGEFSQHFNWDLIETLKPYGGIRIEDNIVIHENRVENMTRDLKLA.

The Mn(2+) site is built by D246, D257, H345, E390, and E429.

Belongs to the peptidase M24B family. Bacterial-type prolidase subfamily. The cofactor is Mn(2+).

It catalyses the reaction Xaa-L-Pro dipeptide + H2O = an L-alpha-amino acid + L-proline. In terms of biological role, splits dipeptides with a prolyl residue in the C-terminal position. The sequence is that of Xaa-Pro dipeptidase from Yersinia enterocolitica serotype O:8 / biotype 1B (strain NCTC 13174 / 8081).